Here is a 173-residue protein sequence, read N- to C-terminus: Regulatory protein RecX (173 aa).

The protein belongs to the RecX family.

It is found in the cytoplasm. Its function is as follows. Modulates RecA activity. This is Regulatory protein RecX from Mycobacterium marinum (strain ATCC BAA-535 / M).